A 348-amino-acid chain; its full sequence is Nicotinate-nucleotide--dimethylbenzimidazole phosphoribosyltransferase (348 aa).

Glutamate 315 (proton acceptor) is an active-site residue.

The protein belongs to the CobT family.

The enzyme catalyses 5,6-dimethylbenzimidazole + nicotinate beta-D-ribonucleotide = alpha-ribazole 5'-phosphate + nicotinate + H(+). The protein operates within nucleoside biosynthesis; alpha-ribazole biosynthesis; alpha-ribazole from 5,6-dimethylbenzimidazole: step 1/2. Catalyzes the synthesis of alpha-ribazole-5'-phosphate from nicotinate mononucleotide (NAMN) and 5,6-dimethylbenzimidazole (DMB). This is Nicotinate-nucleotide--dimethylbenzimidazole phosphoribosyltransferase from Dechloromonas aromatica (strain RCB).